A 322-amino-acid polypeptide reads, in one-letter code: Beta-1,3-galactosyltransferase bre-5 (322 aa).

At 1 to 16 the chain is on the cytoplasmic side; sequence MFLCVRILKRKYHELS. A helical; Signal-anchor for type II membrane protein transmembrane segment spans residues 17 to 37; that stretch reads SFQKLLIFTITIFLLWVLGVV. The Lumenal segment spans residues 38–322; it reads DKFRETSFGD…YEYSQLNGFE (285 aa). N150 is a glycosylation site (N-linked (GlcNAc...) asparagine).

It belongs to the glycosyltransferase 31 family. In terms of tissue distribution, expressed in the gut.

The protein localises to the golgi apparatus membrane. The protein operates within protein modification; protein glycosylation. Its function is as follows. Transfers N-acetylgalactosamine onto mannose groups of carbohydrate substrates. Required for susceptibility to pore-forming crystal toxins in conjunction with bre-1, bre-2, bre-3, and bre-4. Involved in resistance to the nematotoxic C.cinerea galectin Cgl2. This Caenorhabditis elegans protein is Beta-1,3-galactosyltransferase bre-5.